Here is a 316-residue protein sequence, read N- to C-terminus: MGLSSSKDIDLLVNFIENRQGATLALPWPEDYRLTLHSVENIPDISREDVQNWAKTYMCCEGELVVVGVIHKAKTRTCRGPIVLQGARGHIYVYNGFFDRSLYHVASSFHDLFSNGLRFFYPIYETCDYALDSTVALDMIAHSKSFSELLHYRNERKNAFFTLKTYPYKTFVRFCNLSMTGFSSKHLIQWRRKLQTSLLDVVFIVQHNFFGDWRELVVVFDGHGMLFCVDREESLLFIARNMSDFLKIGCLRYNENRRLHTQWFTQDTDYIKQVDEMFSRDVLCPLREHCQRSRRDRGLLKICTSLVRGINCIERG.

It belongs to the herpesviridae US22 family.

The protein is Protein U25 (U25) of Human herpesvirus 6B (HHV-6 variant B).